Consider the following 903-residue polypeptide: Protein translocase subunit SecA (903 aa).

ATP contacts are provided by residues Gln87, 105-109 (GEGKT), and Asp494. The interval 861 to 883 (SGSQGAAPRQPVRAEGKKVGRND) is disordered. Over residues 872–881 (VRAEGKKVGR) the composition is skewed to basic and acidic residues. The Zn(2+) site is built by Cys885, Cys887, Cys896, and Cys897.

Belongs to the SecA family. Monomer and homodimer. Part of the essential Sec protein translocation apparatus which comprises SecA, SecYEG and auxiliary proteins SecDF. Other proteins may also be involved. The cofactor is Zn(2+).

The protein localises to the cell membrane. It is found in the cytoplasm. It catalyses the reaction ATP + H2O + cellular proteinSide 1 = ADP + phosphate + cellular proteinSide 2.. In terms of biological role, part of the Sec protein translocase complex. Interacts with the SecYEG preprotein conducting channel. Has a central role in coupling the hydrolysis of ATP to the transfer of proteins into and across the cell membrane, serving as an ATP-driven molecular motor driving the stepwise translocation of polypeptide chains across the membrane. This chain is Protein translocase subunit SecA, found in Symbiobacterium thermophilum (strain DSM 24528 / JCM 14929 / IAM 14863 / T).